The sequence spans 416 residues: Serine hydroxymethyltransferase (416 aa).

Residues Leu-118 and 122–124 (GHL) contribute to the (6S)-5,6,7,8-tetrahydrofolate site. Lys-226 is subject to N6-(pyridoxal phosphate)lysine. Residues Glu-242 and 350 to 352 (SPF) each bind (6S)-5,6,7,8-tetrahydrofolate.

It belongs to the SHMT family. Homodimer. Pyridoxal 5'-phosphate is required as a cofactor.

The protein resides in the cytoplasm. The enzyme catalyses (6R)-5,10-methylene-5,6,7,8-tetrahydrofolate + glycine + H2O = (6S)-5,6,7,8-tetrahydrofolate + L-serine. It participates in one-carbon metabolism; tetrahydrofolate interconversion. It functions in the pathway amino-acid biosynthesis; glycine biosynthesis; glycine from L-serine: step 1/1. Catalyzes the reversible interconversion of serine and glycine with tetrahydrofolate (THF) serving as the one-carbon carrier. This reaction serves as the major source of one-carbon groups required for the biosynthesis of purines, thymidylate, methionine, and other important biomolecules. Also exhibits THF-independent aldolase activity toward beta-hydroxyamino acids, producing glycine and aldehydes, via a retro-aldol mechanism. The chain is Serine hydroxymethyltransferase from Helicobacter pylori (strain Shi470).